We begin with the raw amino-acid sequence, 141 residues long: Hemoglobin subunit alpha (141 aa).

The Globin domain maps to 1 to 141 (VLSPADKTNV…VSTVLTSKYR (141 aa)). Residue serine 3 is modified to Phosphoserine. Lysine 7 bears the N6-succinyllysine mark. Residue threonine 8 is modified to Phosphothreonine. At lysine 11 the chain carries N6-succinyllysine. Lysine 16 bears the N6-acetyllysine; alternate mark. The residue at position 16 (lysine 16) is an N6-succinyllysine; alternate. Position 24 is a phosphotyrosine (tyrosine 24). Serine 35 carries the phosphoserine modification. Residue lysine 40 is modified to N6-succinyllysine. Serine 49 is subject to Phosphoserine. Histidine 58 contributes to the O2 binding site. Residue histidine 87 participates in heme b binding. Serine 102 is subject to Phosphoserine. Threonine 108 carries the phosphothreonine modification. Serine 124 is subject to Phosphoserine. Phosphothreonine is present on residues threonine 134 and threonine 137. Position 138 is a phosphoserine (serine 138).

Belongs to the globin family. Heterotetramer of two alpha chains and two beta chains. Red blood cells.

Functionally, involved in oxygen transport from the lung to the various peripheral tissues. This Tamias merriami (Merriam's chipmunk) protein is Hemoglobin subunit alpha.